The primary structure comprises 495 residues: Cobyric acid synthase (495 aa).

The GATase cobBQ-type domain occupies 249 to 442 (KFIVKVPVVT…LHGVFDEPEA (194 aa)). Catalysis depends on Cys-330, which acts as the Nucleophile. His-434 is an active-site residue.

The protein belongs to the CobB/CobQ family. CobQ subfamily.

Its pathway is cofactor biosynthesis; adenosylcobalamin biosynthesis. Its function is as follows. Catalyzes amidations at positions B, D, E, and G on adenosylcobyrinic A,C-diamide. NH(2) groups are provided by glutamine, and one molecule of ATP is hydrogenolyzed for each amidation. In Aliivibrio fischeri (strain ATCC 700601 / ES114) (Vibrio fischeri), this protein is Cobyric acid synthase.